A 1906-amino-acid polypeptide reads, in one-letter code: Zinc metalloprotease ZmpB (1906 aa).

The signal sequence occupies residues 1 to 33 (MFKKDRFSIRKIKGVVGSVFLGSLLMAPSVVDA). A propeptide spanning residues 34-76 (ATYHYVNKEIISQEAKDLIQTGKPDRNEVVYGLVYQKDQLPQT) is cleaved from the precursor. An LPXTG sorting signal motif is present at residues 73–77 (LPQTG). Thr76 is subject to Pentaglycyl murein peptidoglycan amidated threonine. Helical transmembrane passes span 77–98 (GTEA…LLIY) and 105–127 (SVFL…DPVA). At 128 to 1906 (TLALASREGV…TNSFKTSIFK (1779 aa)) the chain is on the extracellular side. The tract at residues 178–436 (VETPQSITNQ…KASSVSPTDY (259 aa)) is disordered. Residues 181 to 196 (PQSITNQEQARTENQV) show a composition bias toward polar residues. Basic and acidic residues-rich tracts occupy residues 201-239 (EAPK…KEDS), 252-262 (VESKPEEKVAV), 271-335 (KPAE…KEET), 352-375 (KQTE…REDE), and 383-408 (EPEK…DKIK). 4 tandem repeats follow at residues 277 to 291 (KVEQ…REDE), 293 to 315 (APVE…ETPK), 361 to 375 (KVEQ…REDE), and 380 to 402 (APVE…ETPK). Positions 277-375 (KVEQAGEPVA…GEPVAPREDE (99 aa)) are 2 X 15 AA repeats of K-V-E-Q-A-G-E-P-V-A-P-R-E-D-E. Residues 293-375 (APVEPEKQPE…GEPVAPREDE (83 aa)) form a 2 X 23 AA approximate repeats region. Polar residues predominate over residues 421-436 (LNNQIDKASSVSPTDY). His1562 is a Zn(2+) binding site. Glu1563 is a catalytic residue. Residues His1566 and Glu1586 each contribute to the Zn(2+) site.

The protein belongs to the peptidase M26 family. Requires Zn(2+) as cofactor. The Gram-positive cell-wall anchor motif LPXTG is located in the N-terminal part, in contrast to such motifs in other known streptococcal and staphylococcal proteins. The protease could be cleaved by the sortase and anchored in the membrane via the two potential N-terminal transmembrane domains, whereas the propeptide located prior to the LPXTG motif would remain attached to the cell wall peptidoglycan by an amide bond.

It is found in the secreted. It localises to the cell wall. Its subcellular location is the membrane. Its function is as follows. Is a virulence factor capable of inducing inflammation in the lower respiratory tract, by increasing tumor necrosis factor alpha (TNF-alpha) concentration in the lungs. Also appears to have other functions important in virulence in models of pneumonia and septicemia. The protein is Zinc metalloprotease ZmpB (zmpB) of Streptococcus pneumoniae serotype 4 (strain ATCC BAA-334 / TIGR4).